We begin with the raw amino-acid sequence, 615 residues long: Fibrinogen alpha chain (615 aa).

The N-terminal stretch at 1 to 19 (MFSVRDLCLVLSLVGAIKT) is a signal peptide. A coiled-coil region spans residues 71 to 602 (CRMKGLIDEV…GHTKARPARG (532 aa)). Positions 267–427 (FGGDGHARGD…TKQEFHTGKL (161 aa)) are disordered. Residues 293 to 302 (GTSSIGNVNP) show a composition bias toward polar residues. The O-linked (GalNAc...) threonine glycan is linked to threonine 325. Low complexity predominate over residues 373-396 (GSAGTWNTGSSGSSSFRPDSSGHG). Cysteine 455 and cysteine 485 are disulfide-bonded. Positions 530–615 (EFAALGESGS…SPLGEPSLTP (86 aa)) are disordered. A compositionally biased stretch (low complexity) spans 537–549 (SGSSSSKTSTHSK). Residues 550–560 (QFVSSSTTVNR) are compositionally biased toward polar residues. Residues 591 to 601 (QKGHTKARPAR) are compositionally biased toward basic residues.

In terms of assembly, heterohexamer; disulfide linked. Contains 2 sets of 3 non-identical chains (alpha, beta and gamma). The 2 heterotrimers are in head to head conformation with the N-termini in a small central domain. Post-translationally, conversion of fibrinogen to fibrin is triggered by thrombin, which cleaves fibrinopeptides A and B from alpha and beta chains, and thus exposes the N-terminal polymerization sites responsible for the formation of the soft clot. The soft clot is converted into the hard clot by factor XIIIA which catalyzes the epsilon-(gamma-glutamyl)lysine cross-linking between gamma chains (stronger) and between alpha chains (weaker) of different monomers. Forms F13A-mediated cross-links between a glutamine and the epsilon-amino group of a lysine residue, forming fibronectin-fibrinogen heteropolymers.

It localises to the secreted. Its function is as follows. Cleaved by the protease thrombin to yield monomers which, together with fibrinogen beta (FGB) and fibrinogen gamma (FGG), polymerize to form an insoluble fibrin matrix. Fibrin has a major function in hemostasis as one of the primary components of blood clots. In addition, functions during the early stages of wound repair to stabilize the lesion and guide cell migration during re-epithelialization. Was originally thought to be essential for platelet aggregation, based on in vitro studies using anticoagulated blood. However, subsequent studies have shown that it is not absolutely required for thrombus formation in vivo. Enhances expression of SELP in activated platelets via an ITGB3-dependent pathway. Maternal fibrinogen is essential for successful pregnancy. Fibrin deposition is also associated with infection, where it protects against IFNG-mediated hemorrhage. May also facilitate the immune response via both innate and T-cell mediated pathways. The protein is Fibrinogen alpha chain (FGA) of Bos taurus (Bovine).